Here is a 159-residue protein sequence, read N- to C-terminus: Transcription elongation factor A protein-like 1 (159 aa).

The segment at 1–97 (MDKPRKENEE…PPCGVGKHKL (97 aa)) is disordered. Over residues 17–34 (KTDEERPPVEHSPEKQSP) the composition is skewed to basic and acidic residues. 6 positions are modified to phosphoserine: Ser28, Ser33, Ser38, Ser39, Ser43, and Ser44. Residues 37-54 (QSSEEQSSEEEFFPEELL) show a composition bias toward acidic residues. Residues 64–80 (SEERPPQEGLSRKDLFE) are compositionally biased toward basic and acidic residues.

This sequence belongs to the TFS-II family. TFA subfamily. In terms of processing, phosphorylation of Ser-38 and Ser-39 is critical for transcriptional repression. As to expression, expressed in all tissues examined. Highly expressed in heart, ovary, prostate and skeletal muscle. Moderately expressed in brain, placenta, testis and small intestine. Weakly expressed in lung, liver and spleen. Expressed in several cancer cell lines.

The protein resides in the nucleus. In terms of biological role, may be involved in transcriptional regulation. Modulates various viral and cellular promoters in a promoter context-dependent manner. For example, transcription from the FOS promoter is increased, while Rous sarcoma virus (RSV) long terminal repeat (LTR) promoter activity is repressed. Does not bind DNA directly. In Homo sapiens (Human), this protein is Transcription elongation factor A protein-like 1.